We begin with the raw amino-acid sequence, 216 residues long: Ethylene-inducing xylanase (216 aa).

The N-terminal stretch at 1-19 (MVSFSSLFVAACAAVTAFA) is a signal peptide. In terms of domain architecture, GH11 spans 28–216 (AITTSQQGTS…SSGSSDITVS (189 aa)). The active-site Nucleophile is Glu112. The active-site Proton donor is Glu203.

Belongs to the glycosyl hydrolase 11 (cellulase G) family.

It is found in the secreted. The enzyme catalyses Endohydrolysis of (1-&gt;4)-beta-D-xylosidic linkages in xylans.. It participates in glycan degradation; xylan degradation. In terms of biological role, endo-1,4-beta-xylanase involved in the hydrolysis of xylan, a major structural heterogeneous polysaccharide found in plant biomass representing the second most abundant polysaccharide in the biosphere, after cellulose. Acts as a pathogen-associated molecular pattern (PAMP) that can trigger plant cell death. Triggers a series of immune responses in citrus fruit and enhanced the resistance of citrus and other fruit against fungal pathogens. In Penicillium digitatum (strain Pd1 / CECT 20795) (Green mold), this protein is Ethylene-inducing xylanase.